The following is a 135-amino-acid chain: Large ribosomal subunit protein bL19 (135 aa).

The protein belongs to the bacterial ribosomal protein bL19 family.

Its function is as follows. This protein is located at the 30S-50S ribosomal subunit interface and may play a role in the structure and function of the aminoacyl-tRNA binding site. The polypeptide is Large ribosomal subunit protein bL19 (Protochlamydia amoebophila (strain UWE25)).